The sequence spans 592 residues: Solute carrier family 13 member 2 (592 aa).

4 helical membrane-spanning segments follow: residues 13–33 (SYLI…LVPS), 53–73 (ALPL…MGIV), 86–106 (SNLL…WNLH), and 114–134 (LLIV…VTAF). A compositionally biased stretch (polar residues) spans 165–177 (SSNVEEGSNNPTF). Residues 165–185 (SSNVEEGSNNPTFELQEPSPQ) are disordered. 8 helical membrane-spanning segments follow: residues 221-241 (MSLC…TGTA), 274-294 (MVIL…GFNF), 324-344 (PMTF…LLWF), 371-391 (GTVA…FPGL), 450-470 (PLQS…VATF), 482-502 (IFLP…LYVM), 511-531 (LAFM…FGDL), and 545-565 (IIGV…LFSL).

The protein belongs to the SLC13A/DASS transporter (TC 2.A.47) family. NADC subfamily. Expressed in kidney and intestine. In kidney expressed in the proximal tubule (at protein level).

The protein localises to the apical cell membrane. The catalysed reaction is succinate(out) + 3 Na(+)(out) = succinate(in) + 3 Na(+)(in). It catalyses the reaction fumarate(out) + 3 Na(+)(out) = fumarate(in) + 3 Na(+)(in). The enzyme catalyses 2-oxoglutarate(out) + 3 Na(+)(out) = 2-oxoglutarate(in) + 3 Na(+)(in). Its activity is regulated as follows. Li(+) decreases succinate transport in the presence of Na(+), by competing at one of the three cation binding sites. Its function is as follows. Low-affinity sodium-dicarboxylate cotransporter, that mediates the entry of citric acid cycle intermediates, such as succinate, citrate, fumarate and alpha-ketoglutarate (2-oxoglutarate) into the small intestine and renal proximal tubule. Transports the dicarboxylate into the cell with a probable stoichiometry of 3 Na(+) for 1 divalent dicarboxylate, rendering the process electrogenic. Citrate is transported in protonated form as a divalent anion, rather than the trivalent form which is normally found in blood. Has a critical role in renal dicarboxylate transport. The polypeptide is Solute carrier family 13 member 2 (SLC13A2) (Homo sapiens (Human)).